Here is a 66-residue protein sequence, read N- to C-terminus: Large ribosomal subunit protein uL29 (66 aa).

The protein belongs to the universal ribosomal protein uL29 family.

The sequence is that of Large ribosomal subunit protein uL29 from Bartonella quintana (strain Toulouse) (Rochalimaea quintana).